We begin with the raw amino-acid sequence, 410 residues long: Large ribosomal subunit protein uL4 (410 aa).

The protein belongs to the universal ribosomal protein uL4 family.

Its subcellular location is the cytoplasm. This chain is Large ribosomal subunit protein uL4 (RPL4), found in Tetrahymena thermophila (strain SB210).